The sequence spans 187 residues: RNA 2',3'-cyclic phosphodiesterase (187 aa).

Catalysis depends on His-40, which acts as the Proton donor. Short sequence motifs (HXTX) lie at residues 40 to 43 (HLTL) and 125 to 128 (HITI). Catalysis depends on His-125, which acts as the Proton acceptor.

This sequence belongs to the 2H phosphoesterase superfamily. ThpR family.

The enzyme catalyses a 3'-end 2',3'-cyclophospho-ribonucleotide-RNA + H2O = a 3'-end 2'-phospho-ribonucleotide-RNA + H(+). Its function is as follows. Hydrolyzes RNA 2',3'-cyclic phosphodiester to an RNA 2'-phosphomonoester. This Thermotoga maritima (strain ATCC 43589 / DSM 3109 / JCM 10099 / NBRC 100826 / MSB8) protein is RNA 2',3'-cyclic phosphodiesterase.